Reading from the N-terminus, the 287-residue chain is PIH1 domain-containing protein 1 (287 aa).

Belongs to the PIH1 family.

The protein resides in the nucleus. Its function is as follows. Involved in the assembly of C/D box small nucleolar ribonucleoprotein (snoRNP) particles. Recruits the SWI/SNF complex to the core promoter of rRNA genes and enhances pre-rRNA transcription. Mediates interaction of TELO2 with the R2TP complex which is necessary for the stability of MTOR and SMG1. Positively regulates the assembly and activity of the mTORC1 complex. The sequence is that of PIH1 domain-containing protein 1 (pih1d1) from Danio rerio (Zebrafish).